Consider the following 160-residue polypeptide: MRLTVIAVGKLKQGPERELAERYRARFDDIGRKLGFRGLDIHEISESRARDAATRMAEEAAAIAALVPDGGALVTLDERGKSVDSAAFAAQLGRWRDESVPGTIFVIGGADGLLPELRRKAKLCLSFGAATWPHQMVRVMLLEQIYRAATILAGHPYHRA.

S-adenosyl-L-methionine is bound by residues Leu76 and Gly108.

It belongs to the RNA methyltransferase RlmH family. Homodimer.

Its subcellular location is the cytoplasm. The catalysed reaction is pseudouridine(1915) in 23S rRNA + S-adenosyl-L-methionine = N(3)-methylpseudouridine(1915) in 23S rRNA + S-adenosyl-L-homocysteine + H(+). Its function is as follows. Specifically methylates the pseudouridine at position 1915 (m3Psi1915) in 23S rRNA. This chain is Ribosomal RNA large subunit methyltransferase H, found in Rhodopseudomonas palustris (strain HaA2).